We begin with the raw amino-acid sequence, 199 residues long: Peroxynitrite isomerase (199 aa).

The GXWXGXG motif lies at 21–27; the sequence is GEWEGRG. His-190 provides a ligand contact to heme b.

Belongs to the nitrobindin family. Homodimer. Heme b serves as cofactor.

The enzyme catalyses peroxynitrite = nitrate. It functions in the pathway nitrogen metabolism. Its function is as follows. Heme-binding protein able to scavenge peroxynitrite and to protect free L-tyrosine against peroxynitrite-mediated nitration, by acting as a peroxynitrite isomerase that converts peroxynitrite to nitrate. Therefore, this protein likely plays a role in peroxynitrite sensing and in the detoxification of reactive nitrogen and oxygen species (RNS and ROS, respectively). Is able to bind nitric oxide (NO) in vitro, but may act as a sensor of peroxynitrite levels in vivo. In Paenarthrobacter aurescens (strain TC1), this protein is Peroxynitrite isomerase.